A 397-amino-acid polypeptide reads, in one-letter code: Phosphoglycerate kinase (397 aa).

Residues 21-23, Arg36, 59-62, Arg118, and Arg151 contribute to the substrate site; these read DFN and HCGR. ATP contacts are provided by residues Lys201, Glu323, and 353–356; that span reads GGDT.

The protein belongs to the phosphoglycerate kinase family. In terms of assembly, monomer.

It is found in the cytoplasm. It carries out the reaction (2R)-3-phosphoglycerate + ATP = (2R)-3-phospho-glyceroyl phosphate + ADP. It participates in carbohydrate degradation; glycolysis; pyruvate from D-glyceraldehyde 3-phosphate: step 2/5. This is Phosphoglycerate kinase from Bartonella quintana (strain Toulouse) (Rochalimaea quintana).